A 444-amino-acid chain; its full sequence is Enolase (444 aa).

The substrate site is built by H163 and E172. E215 functions as the Proton donor in the catalytic mechanism. 3 residues coordinate Mg(2+): D250, E300, and D327. Substrate is bound by residues E300 and D327. K352 acts as the Proton acceptor in catalysis. Substrate is bound by residues 379 to 382 (SHRS) and K403.

It belongs to the enolase family. Homodimer. Requires Mg(2+) as cofactor.

Its subcellular location is the cytoplasm. It catalyses the reaction (2R)-2-phosphoglycerate = phosphoenolpyruvate + H2O. The protein operates within carbohydrate degradation; glycolysis; pyruvate from D-glyceraldehyde 3-phosphate: step 4/5. The protein is Enolase (PGH1) of Solanum lycopersicum (Tomato).